Reading from the N-terminus, the 350-residue chain is Uroporphyrinogen decarboxylase (350 aa).

Substrate is bound by residues 27–31, phenylalanine 46, aspartate 76, tyrosine 152, serine 207, and histidine 321; that span reads RQAGR.

This sequence belongs to the uroporphyrinogen decarboxylase family. Homodimer.

The protein localises to the cytoplasm. It catalyses the reaction uroporphyrinogen III + 4 H(+) = coproporphyrinogen III + 4 CO2. It participates in porphyrin-containing compound metabolism; protoporphyrin-IX biosynthesis; coproporphyrinogen-III from 5-aminolevulinate: step 4/4. In terms of biological role, catalyzes the decarboxylation of four acetate groups of uroporphyrinogen-III to yield coproporphyrinogen-III. The sequence is that of Uroporphyrinogen decarboxylase from Listeria innocua serovar 6a (strain ATCC BAA-680 / CLIP 11262).